A 254-amino-acid chain; its full sequence is Imidazole glycerol phosphate synthase subunit HisF (254 aa).

Active-site residues include Asp12 and Asp131.

This sequence belongs to the HisA/HisF family. As to quaternary structure, heterodimer of HisH and HisF.

Its subcellular location is the cytoplasm. The catalysed reaction is 5-[(5-phospho-1-deoxy-D-ribulos-1-ylimino)methylamino]-1-(5-phospho-beta-D-ribosyl)imidazole-4-carboxamide + L-glutamine = D-erythro-1-(imidazol-4-yl)glycerol 3-phosphate + 5-amino-1-(5-phospho-beta-D-ribosyl)imidazole-4-carboxamide + L-glutamate + H(+). It participates in amino-acid biosynthesis; L-histidine biosynthesis; L-histidine from 5-phospho-alpha-D-ribose 1-diphosphate: step 5/9. Its function is as follows. IGPS catalyzes the conversion of PRFAR and glutamine to IGP, AICAR and glutamate. The HisF subunit catalyzes the cyclization activity that produces IGP and AICAR from PRFAR using the ammonia provided by the HisH subunit. This Herminiimonas arsenicoxydans protein is Imidazole glycerol phosphate synthase subunit HisF.